Here is a 98-residue protein sequence, read N- to C-terminus: Large ribosomal subunit protein uL23 (98 aa).

The protein belongs to the universal ribosomal protein uL23 family. Part of the 50S ribosomal subunit. Contacts protein L29, and trigger factor when it is bound to the ribosome.

One of the early assembly proteins it binds 23S rRNA. One of the proteins that surrounds the polypeptide exit tunnel on the outside of the ribosome. Forms the main docking site for trigger factor binding to the ribosome. This chain is Large ribosomal subunit protein uL23, found in Methylobacterium nodulans (strain LMG 21967 / CNCM I-2342 / ORS 2060).